The following is a 336-amino-acid chain: D-erythrose-4-phosphate dehydrogenase (336 aa).

11-12 (RI) is a binding site for NAD(+). Substrate-binding positions include 153–155 (SCT), R199, 212–213 (TR), and R235. Catalysis depends on C154, which acts as the Nucleophile. Residue N317 coordinates NAD(+).

The protein belongs to the glyceraldehyde-3-phosphate dehydrogenase family. Epd subfamily. Homotetramer.

Its subcellular location is the cytoplasm. The enzyme catalyses D-erythrose 4-phosphate + NAD(+) + H2O = 4-phospho-D-erythronate + NADH + 2 H(+). Its pathway is cofactor biosynthesis; pyridoxine 5'-phosphate biosynthesis; pyridoxine 5'-phosphate from D-erythrose 4-phosphate: step 1/5. Functionally, catalyzes the NAD-dependent conversion of D-erythrose 4-phosphate to 4-phosphoerythronate. This Alteromonas mediterranea (strain DSM 17117 / CIP 110805 / LMG 28347 / Deep ecotype) protein is D-erythrose-4-phosphate dehydrogenase.